A 162-amino-acid chain; its full sequence is Lipid droplet assembly factor 1-A (162 aa).

Residues 1 to 42 (MASAENLYQEKMQELQKQMNKVMQTINNHSKVEAFLNSPFGQ) are Cytoplasmic-facing. Residues 43 to 63 (YLDQHPFVTLSLLVFISLSAV) form a helical membrane-spanning segment. The Lumenal portion of the chain corresponds to 64–65 (PV). The helical transmembrane segment at 66–86 (GIFLTLIAGTAIAVCLAVLII) threads the bilayer. E87 is a topological domain (cytoplasmic). Residues 88 to 108 (GIVISVGGIALLCILCGLAVM) form a helical membrane-spanning segment. Residue S109 is a topological domain, lumenal. Residues 110–130 (LGVAAVLCVSYVAGSSVLNYI) form a helical membrane-spanning segment. At 131-162 (HAYRVTVGTRGRSGPISLNHETTTAEKSYRSS) the chain is on the cytoplasmic side.

This sequence belongs to the LDAF1 family.

The protein resides in the endoplasmic reticulum membrane. The protein localises to the lipid droplet. Functionally, plays an important role in the formation of lipid droplets (LD) which are storage organelles at the center of lipid and energy homeostasis. The protein is Lipid droplet assembly factor 1-A of Xenopus laevis (African clawed frog).